The sequence spans 88 residues: MAHKKGASSSRNGRDSAAQRLGVKRFGGQVVKAGEILVRQRGTHFHPGVNVGRGGDDTLFATAPGAVEFGTKRGRKYVNIVRVTRAEA.

It belongs to the bacterial ribosomal protein bL27 family.

This Mycolicibacterium vanbaalenii (strain DSM 7251 / JCM 13017 / BCRC 16820 / KCTC 9966 / NRRL B-24157 / PYR-1) (Mycobacterium vanbaalenii) protein is Large ribosomal subunit protein bL27.